A 443-amino-acid polypeptide reads, in one-letter code: D-alanyl-D-alanine carboxypeptidase DacA (443 aa).

The N-terminal stretch at 1–31 (MNIKKCKQLLMSLVVLTLAVTCLAPMSKAKA) is a signal peptide. Serine 67 acts as the Acyl-ester intermediate in catalysis. Residue lysine 70 is the Proton acceptor of the active site. The active site involves serine 131. Lysine 258 is a binding site for substrate.

The protein belongs to the peptidase S11 family.

It is found in the secreted. Its subcellular location is the cell wall. The protein localises to the cell membrane. The protein resides in the membrane raft. The catalysed reaction is Preferential cleavage: (Ac)2-L-Lys-D-Ala-|-D-Ala. Also transpeptidation of peptidyl-alanyl moieties that are N-acyl substituents of D-alanine.. It participates in cell wall biogenesis; peptidoglycan biosynthesis. Its function is as follows. Removes C-terminal D-alanyl residues from sugar-peptide cell wall precursors. In Bacillus subtilis (strain 168), this protein is D-alanyl-D-alanine carboxypeptidase DacA (dacA).